The following is a 345-amino-acid chain: Protein RecA (345 aa).

66 to 73 (GPESSGKT) is a binding site for ATP.

The protein belongs to the RecA family.

It is found in the cytoplasm. In terms of biological role, can catalyze the hydrolysis of ATP in the presence of single-stranded DNA, the ATP-dependent uptake of single-stranded DNA by duplex DNA, and the ATP-dependent hybridization of homologous single-stranded DNAs. It interacts with LexA causing its activation and leading to its autocatalytic cleavage. The sequence is that of Protein RecA from Acidithiobacillus ferrooxidans (strain ATCC 23270 / DSM 14882 / CIP 104768 / NCIMB 8455) (Ferrobacillus ferrooxidans (strain ATCC 23270)).